A 657-amino-acid chain; its full sequence is Knob-associated histidine-rich protein (657 aa).

The N-terminal stretch at 1-34 (MKSFKNKNTLRRKKAFPVFTKILLVSFLVWVLKC) is a signal peptide. A glycan (N-linked (GlcNAc...) asparagine) is linked at N42. The span at 57-76 (AQKQHEHHHHHHHHHHHQHQ) shows a compositional bias: basic residues. Disordered regions lie at residues 57-138 (AQKQ…PSNE), 282-301 (AHDG…SEGY), and 352-657 (VNKY…GCCG). Residues 99 to 108 (PQVHQQVHGQ) show a composition bias toward low complexity. Positions 112-123 (HHHHHHHHHHLH) are enriched in basic residues. Basic and acidic residues-rich tracts occupy residues 357-378 (KHGD…EGEK) and 399-408 (KDNEDAESVK). The segment covering 409–425 (SKKHKSHDCEKKKSKKH) has biased composition (basic residues). Residues 426–435 (KDNEDAESVK) are compositionally biased toward basic and acidic residues. Positions 453–468 (AAKKLTKKIKIKKKTN) are enriched in basic residues. The span at 473-496 (DGSKAHEKKENETKNTAGENKKVD) shows a compositional bias: basic and acidic residues. A compositionally biased stretch (polar residues) spans 497 to 508 (STSADNKSTNAA). Composition is skewed to basic and acidic residues over residues 512–523 (AKDKTQGGKTDK) and 551–578 (STSK…EATK). The segment covering 590–614 (ASTTEGATKGASTTAGSTTGATTGA) has biased composition (low complexity). Positions 628-643 (AANNGEQVMSRGQAQL) are enriched in polar residues. The span at 648–657 (KKKKKRGCCG) shows a compositional bias: basic residues.

The protein localises to the secreted. Functionally, KAHRP might mimick human histidine-rich glycoproteins to anchor host thrombospondin or a parasite analog in a binding complex with the endothelial cell receptor. This Plasmodium falciparum (isolate NF7 / Ghana) protein is Knob-associated histidine-rich protein (SD17).